The sequence spans 130 residues: Small ribosomal subunit protein uS8 (130 aa).

Belongs to the universal ribosomal protein uS8 family. Part of the 30S ribosomal subunit. Contacts proteins S5 and S12.

Its function is as follows. One of the primary rRNA binding proteins, it binds directly to 16S rRNA central domain where it helps coordinate assembly of the platform of the 30S subunit. The sequence is that of Small ribosomal subunit protein uS8 from Vibrio vulnificus (strain CMCP6).